Reading from the N-terminus, the 377-residue chain is MSSDSSRRIQVPEELKEVLLQFSISFLVEQPPDVIDYAVEYFTKLQSERPSVSHTDQSTDDQLSVNSQDADAEPPVMASSRRKSVFAEAYDPEADDDDDGATAVFPKTDEQRARLVESVKNVLLFRSLEKEQMNQVLDAMFERKVQPGDFIIRQGDDGDNFYVIESGVYKVYINDKHINTYNHTGLFGELALLYNMPRAATVQAETSGLLWAMDRQTFRRILLKSAFRKRKMYEELLNSVPMLKALQNYERMNLADALVSKSYDNGERIIKQGDAADGMYFIEEGTVSVRMDQDDAEVEISQLGKGQYFGELALVTHRPRAASVYATGGVVKLAFLDVKAFERLLGPCMDIMKRNIDDYESQLVKIFGSKNNITDTR.

Residues 48 to 69 (ERPSVSHTDQSTDDQLSVNSQD) show a composition bias toward polar residues. Positions 48–78 (ERPSVSHTDQSTDDQLSVNSQDADAEPPVMA) are disordered. Phosphoserine is present on residues serine 51, serine 58, serine 64, serine 67, and serine 84. Positions 81–85 (RRKSV) match the Pseudophosphorylation motif motif. Tyrosine 90 is modified (phosphotyrosine). 3',5'-cyclic AMP contacts are provided by residues 124–239 (LFRS…LLNS), glutamate 189, arginine 198, 242–362 (MLKA…YESQ), glutamate 311, and arginine 320.

The protein belongs to the cAMP-dependent kinase regulatory chain family. Tetramer, composed of 2 regulatory (R) and 2 catalytic (C) subunits. In the presence of cAMP it dissociates into 2 active monomeric C subunits and an R dimer. Interacts with Akap200. Post-translationally, the pseudophosphorylation site binds to the substrate-binding region of the catalytic chain but is not phosphorylated. The physiological significance of phosphorylations by other kinases is unclear. In terms of tissue distribution, detected in follicle cells, germline-derived cells, germline line stem cells and outer rim of ring canals of nurse cells throughout oogenesis (at protein level).

It localises to the cytoplasm. It is found in the cell membrane. Functionally, regulatory subunit of the cAMP-dependent protein kinases involved in cAMP signaling in cells. Mediates membrane association by binding to anchoring proteins, such as Akap200. Might play an essential role in the regulation of neuronal activity in the brain. The chain is cAMP-dependent protein kinase type II regulatory subunit (Pka-R2) from Drosophila melanogaster (Fruit fly).